A 121-amino-acid polypeptide reads, in one-letter code: MARIAGVNVPNHQHTVIGLTAIYGIGRPRSQKICDTAGVPTTKKVKDLDDNELEKLRDEIAKFIVEGDLRRELSMNIKRLMDLGCYRGMRHRKGLPCRGQRTRTNARTRKGPRKAAQSLKK.

Residues 92–121 (RKGLPCRGQRTRTNARTRKGPRKAAQSLKK) form a disordered region.

The protein belongs to the universal ribosomal protein uS13 family. As to quaternary structure, part of the 30S ribosomal subunit. Forms a loose heterodimer with protein S19. Forms two bridges to the 50S subunit in the 70S ribosome.

In terms of biological role, located at the top of the head of the 30S subunit, it contacts several helices of the 16S rRNA. In the 70S ribosome it contacts the 23S rRNA (bridge B1a) and protein L5 of the 50S subunit (bridge B1b), connecting the 2 subunits; these bridges are implicated in subunit movement. Contacts the tRNAs in the A and P-sites. The polypeptide is Small ribosomal subunit protein uS13 (Janthinobacterium sp. (strain Marseille) (Minibacterium massiliensis)).